Here is a 309-residue protein sequence, read N- to C-terminus: D-allose kinase (309 aa).

Residues 10–17 (GVDMGATH) and 142–149 (GMGFAVWM) each bind ATP.

Belongs to the ROK (NagC/XylR) family.

The catalysed reaction is D-allose + ATP = D-allose 6-phosphate + ADP + H(+). The protein operates within carbohydrate degradation; D-allose degradation. Catalyzes the phosphorylation of D-allose to D-allose 6-phosphate. Also has low level glucokinase activity in vitro. In Escherichia coli (strain K12), this protein is D-allose kinase.